Here is a 49-residue protein sequence, read N- to C-terminus: MRTKVTLACTECKQRNYDSMKNKKNDPDRLEMKKYCKFCKKHTLHRETK.

The protein belongs to the bacterial ribosomal protein bL33 family.

This Clostridium beijerinckii (strain ATCC 51743 / NCIMB 8052) (Clostridium acetobutylicum) protein is Large ribosomal subunit protein bL33.